A 330-amino-acid chain; its full sequence is Aspartate--ammonia ligase (330 aa).

The protein belongs to the class-II aminoacyl-tRNA synthetase family. AsnA subfamily.

Its subcellular location is the cytoplasm. The catalysed reaction is L-aspartate + NH4(+) + ATP = L-asparagine + AMP + diphosphate + H(+). The protein operates within amino-acid biosynthesis; L-asparagine biosynthesis; L-asparagine from L-aspartate (ammonia route): step 1/1. In Shigella boydii serotype 18 (strain CDC 3083-94 / BS512), this protein is Aspartate--ammonia ligase.